The sequence spans 345 residues: Phosphate acyltransferase (345 aa).

The protein belongs to the PlsX family. In terms of assembly, homodimer. Probably interacts with PlsY.

The protein localises to the cytoplasm. It carries out the reaction a fatty acyl-[ACP] + phosphate = an acyl phosphate + holo-[ACP]. It participates in lipid metabolism; phospholipid metabolism. In terms of biological role, catalyzes the reversible formation of acyl-phosphate (acyl-PO(4)) from acyl-[acyl-carrier-protein] (acyl-ACP). This enzyme utilizes acyl-ACP as fatty acyl donor, but not acyl-CoA. The sequence is that of Phosphate acyltransferase from Wolbachia sp. subsp. Brugia malayi (strain TRS).